Here is a 1247-residue protein sequence, read N- to C-terminus: MDNIEPPFSGNIHAETEVKKEEKKKMKKESVSLMGLFSAADNVDYFLMFLGGLGTCIHGGTLPLFFVFFGGMLDSLGKLSTDPNAISSRVSQNALYLVYLGLVNLVSAWIGVACWMQTGERQTARLRINYLKSILAKDITFFDTEARDSNFIFHISSDAILVQDAIGDKTGHVLRYLCQFIAGFVIGFLSVWQLTLLTLGVVPLIAIAGGGYAIVMSTISEKSEAAYADAGKVAEEVMSQVRTVYAFVGEEKAVKSYSNSLKKALKLSKRSGLAKGLGVGLTYSLLFCAWALLFWYASLLVRHGKTNGAKAFTTILNVIYSGFALGQAVPSLSAISKGRVAAANIFKMIGNNNLESSERLENGTTLQNVVGKIEFCGVSFAYPSRPNMVFENLSFTIHSGKTFAFVGPSGSGKSTIISMVQRFYEPRSGEILLDGNDIKNLKLKWLREQMGLVSQEPALFATTIASNILLGKEKANMDQIIEAAKAANADSFIKSLPNGYNTQVGEGGTQLSGGQKQRIAIARAVLRNPKILLLDEATSALDAESEKIVQQALDNVMEKRTTIVIAHRLSTIRNVDKIVVLRDGQVRETGSHSELISRGGDYATLVNCQDTEPQENLRSVMYESCRSQAGSYSSRRVFSSRRTSSFREDQEKTEKDSKGEDLISSSSMIWELIKLNAPEWLYALLGSIGAVLAGSQPALFSMGLAYVLTTFYSPFPSLIKREVDKVAIIFVGAGIVTAPIYILQHYFYTLMGERLTSRVRLSLFSAILSNEIGWFDLDENNTGSLTSILAADATLVRSAIADRLSTIVQNLSLTITALALAFFYSWRVAAVVTACFPLLIAASLTEQLFLKGFGGDYTRAYSRATSLAREAISNIRTVAAFSAEKQISEQFTCELSKPTKSALLRGHISGFGYGLSQCLAFCSYALGLWYISVLIKRNETNFEDSIKSFMVLLVTAYSVAETLALTPDIVKGTQALGSVFRVLHRETEIPPDQPNSRLVTHIKGDIEFRNVSFAYPTRPEIAIFKNLNLRVSAGKSLAVVGPSGSGKSTVIGLIMRFYDPSNGNLCIDGHDIKSVNLRSLRKKLALVQQEPALFSTSIHENIKYGNENASEAEIIEAAKAANAHEFISRMEEGYMTHVGDKGVQLSGGQKQRVAIARAVLKDPSVLLLDEATSALDTSAEKQVQEALDKLMKGRTTILVAHRLSTIRKADTIVVLHKGKVVEKGSHRELVSKSDGFYKKLTSLQEAV.

The region spanning 48–337 (MFLGGLGTCI…AVPSLSAISK (290 aa)) is the ABC transmembrane type-1 1 domain. 6 consecutive transmembrane segments (helical) span residues 49–69 (FLGGLGTCIHGGTLPLFFVFF), 95–115 (LYLVYLGLVNLVSAWIGVACW), 172–192 (HVLRYLCQFIAGFVIGFLSVW), 196–216 (LLTLGVVPLIAIAGGGYAIVM), 277–297 (LGVGLTYSLLFCAWALLFWYA), and 315–335 (ILNVIYSGFALGQAVPSLSAI). Residues Asn362 and Asn392 are each glycosylated (N-linked (GlcNAc...) asparagine). In terms of domain architecture, ABC transporter 1 spans 373-608 (IEFCGVSFAY…GGDYATLVNC (236 aa)). Residue 407-414 (GPSGSGKS) coordinates ATP. Residues 679-971 (EWLYALLGSI…TLALTPDIVK (293 aa)) enclose the ABC transmembrane type-1 2 domain. The next 2 membrane-spanning stretches (helical) occupy residues 680 to 700 (WLYALLGSIGAVLAGSQPALF) and 727 to 747 (AIIFVGAGIVTAPIYILQHYF). N-linked (GlcNAc...) asparagine glycosylation occurs at Asn780. 3 helical membrane passes run 807 to 824 (IVQNLSLTITALALAFFY), 830 to 850 (AVVTACFPLLIAASLTEQLFL), and 915 to 935 (LSQCLAFCSYALGLWYISVLI). A glycan (N-linked (GlcNAc...) asparagine) is linked at Asn938. A helical transmembrane segment spans residues 949-969 (FMVLLVTAYSVAETLALTPDI). The region spanning 1006–1242 (IEFRNVSFAY…SDGFYKKLTS (237 aa)) is the ABC transporter 2 domain. Asn1010 carries an N-linked (GlcNAc...) asparagine glycan. Residue 1041–1048 (GPSGSGKS) participates in ATP binding. Asn1108 is a glycosylation site (N-linked (GlcNAc...) asparagine).

This sequence belongs to the ABC transporter superfamily. ABCB family. Multidrug resistance exporter (TC 3.A.1.201) subfamily.

It is found in the membrane. This Arabidopsis thaliana (Mouse-ear cress) protein is ABC transporter B family member 14 (ABCB14).